Here is a 166-residue protein sequence, read N- to C-terminus: Small ribosomal subunit protein uS3m (166 aa).

The N-terminal 25 residues, 1-25 (MLRSLQHVESHINQCRRISTTSTLL), are a transit peptide targeting the mitochondrion.

This sequence belongs to the universal ribosomal protein uS3 family. In terms of assembly, component of the mitochondrial ribosome small subunit (28S) which comprises a 12S rRNA and about 30 distinct proteins.

It is found in the mitochondrion. The chain is Small ribosomal subunit protein uS3m (mrps-24) from Caenorhabditis briggsae.